A 135-amino-acid polypeptide reads, in one-letter code: Small ribosomal subunit protein uS8 (135 aa).

This sequence belongs to the universal ribosomal protein uS8 family. In terms of assembly, part of the 30S ribosomal subunit. Contacts proteins S5 and S12.

In terms of biological role, one of the primary rRNA binding proteins, it binds directly to 16S rRNA central domain where it helps coordinate assembly of the platform of the 30S subunit. This chain is Small ribosomal subunit protein uS8, found in Parafrankia sp. (strain EAN1pec).